The primary structure comprises 1656 residues: Probable phospholipid-transporting ATPase DNF3 (1656 aa).

The Lumenal segment spans residues 1-164; that stretch reads MGIADGQRRR…PRQLYAQFSK (164 aa). Residues 36 to 74 are disordered; the sequence is ELEDINESKTFSGSDNNDKDDRDETSGNYAAEEDYEMEE. A compositionally biased stretch (basic and acidic residues) spans 51-60; the sequence is NNDKDDRDET. A helical transmembrane segment spans residues 165-185; sequence LANTYFFIVAVLQMIPGWSTT. Residues 186 to 451 lie on the Cytoplasmic side of the membrane; sequence GTYTTIIPLC…RTKAPKLQRK (266 aa). The helical transmembrane segment at 452–472 threads the bilayer; the sequence is INMIIVFMVFVVATISLFSYL. Residues 473-495 lie on the Lumenal side of the membrane; sequence GHVLHKKKYIDQNKAWYLFQADA. A helical membrane pass occupies residues 496 to 516; that stretch reads GVAPTIMSFIIMYNTVIPLSL. The Cytoplasmic portion of the chain corresponds to 517–1157; it reads YVTMEIIKVV…ISKMNAVSQE (641 aa). Residue Asp566 is the 4-aspartylphosphate intermediate of the active site. ATP contacts are provided by Asp566, Lys567, and Thr568. Asp566 lines the Mg(2+) pocket. Thr568 contributes to the Mg(2+) binding site. Residue Ser627 is modified to Phosphoserine. Residues Glu765, Phe813, Ser815, Lys818, Lys838, Arg1034, Thr1035, Thr1114, Gly1115, Asp1116, 1167-1174, Arg1202, and Lys1208 each bind ATP; that span reads VVVIDGAT. A helical transmembrane segment spans residues 1158-1178; that stretch reads VDSGNIAHCVVVIDGATMAMF. Topologically, residues 1179–1318 are lumenal; it reads EGNPTYMSVF…MFSGSSLYEP (140 aa). Asp1229 contacts Mg(2+). Positions 1232 and 1233 each coordinate ATP. Residues 1319-1339 form a helical membrane-spanning segment; it reads WSLSMFNTLFTSLPVLCIGMF. At 1340 to 1365 the chain is on the cytoplasmic side; it reads EKDLKPMTLLTVPELYSYGRLSQGFN. Residues 1366–1386 form a helical membrane-spanning segment; the sequence is WLIFMEWVILATTNSLIITFL. Residues 1387-1395 lie on the Lumenal side of the membrane; sequence NVVMWGMSS. The chain crosses the membrane as a helical span at residues 1396–1416; sequence LSDNTMYPLGLINFTAIVALI. Residues 1417-1432 are Cytoplasmic-facing; that stretch reads NVKSQFVEMHNRNWLA. Residues 1433–1453 form a helical membrane-spanning segment; it reads FTSVVLSCGGWLVWCCALPIL. Topologically, residues 1454–1473 are lumenal; the sequence is NNTDQIYDVAYGFYNHFGKD. A helical membrane pass occupies residues 1474–1494; that stretch reads ITFWCTSLVLALLPITLDIVY. The Cytoplasmic portion of the chain corresponds to 1495 to 1656; that stretch reads KTFKVMIWPS…IIQARLKDLE (162 aa). The interval 1554–1576 is disordered; the sequence is PRTNSRASAKTHNSSIYSMSNGN.

It belongs to the cation transport ATPase (P-type) (TC 3.A.3) family. Type IV subfamily. In terms of assembly, component of a flippase complex consisting of DNF3 and YNR048W/CRF1. Interacts with YNR048W/CRF1; the interaction is direct and required for proper expression and endoplasmic reticulum (ER) export of either partner. Requires Mg(2+) as cofactor.

The protein resides in the golgi apparatus. Its subcellular location is the trans-Golgi network membrane. It localises to the endosome membrane. It catalyses the reaction ATP + H2O + phospholipidSide 1 = ADP + phosphate + phospholipidSide 2.. The enzyme catalyses a 1,2-diacyl-sn-glycero-3-phosphocholine(out) + ATP + H2O = a 1,2-diacyl-sn-glycero-3-phosphocholine(in) + ADP + phosphate + H(+). The catalysed reaction is a 1,2-diacyl-sn-glycero-3-phosphoethanolamine(out) + ATP + H2O = a 1,2-diacyl-sn-glycero-3-phosphoethanolamine(in) + ADP + phosphate + H(+). Its function is as follows. Catalytic component of a P4-ATPase flippase complex which catalyzes the hydrolysis of ATP coupled to the transport of phosphatidylcholine and small amounts of phosphatidylethanolamine from the lumen to the cytosolic leaflet of the trans-Golgi network and ensures the maintenance of asymmetric distribution of phospholipids. May be involved in transport from early endosomes to the trans-Golgi network (TGN). The polypeptide is Probable phospholipid-transporting ATPase DNF3 (DNF3) (Saccharomyces cerevisiae (strain ATCC 204508 / S288c) (Baker's yeast)).